The primary structure comprises 634 residues: 3-dehydroshikimate dehydratase (634 aa).

A divalent metal cation is bound by residues E134, D165, Q191, and E239. 2 VOC domains span residues 295–414 (GIEF…LVER) and 440–590 (RVDH…VFTE). H443, H521, and E599 together coordinate Mg(2+).

It belongs to the bacterial two-domain DSD family. In terms of assembly, homodimer. The cofactor is Co(2+). Ni(2+) is required as a cofactor. It depends on Mg(2+) as a cofactor. Mn(2+) serves as cofactor.

It carries out the reaction 3-dehydroshikimate = 3,4-dihydroxybenzoate + H2O. It functions in the pathway aromatic compound metabolism; 3,4-dihydroxybenzoate biosynthesis. Its function is as follows. Catalyzes the conversion of 3-dehydroshikimate to protocatechuate (3,4-dihydroxybenzoate), a common intermediate of quinate and shikimate degradation pathways. Is required for growth on either quinate or shikimate as a sole carbon source. This Pseudomonas aeruginosa (strain ATCC 15692 / DSM 22644 / CIP 104116 / JCM 14847 / LMG 12228 / 1C / PRS 101 / PAO1) protein is 3-dehydroshikimate dehydratase.